Here is a 1045-residue protein sequence, read N- to C-terminus: Unconventional myosin-Ia (1045 aa).

The Myosin motor domain occupies 11–697 (AAVGDLVMLD…TLFDLEKRRQ (687 aa)). An ATP-binding site is contributed by 104-111 (GESGAGKT). Residues 574–596 (VATLMKNLYSKNPNYIRCIKPND) are actin-binding. 3 IQ domains span residues 701 to 727 (AELATLIQKMFRGWCCRKRYQLMRKSQ), 723 to 750 (MRKSQILISAWFRGHMQRNRYKQMKRSV), and 746 to 774 (MKRSVLLLQAYARGWKTRRMYRRYFRSDA). The TH1 domain maps to 861-1044 (KALYAQSLQQ…RGSHKMEILV (184 aa)).

It belongs to the TRAFAC class myosin-kinesin ATPase superfamily. Myosin family. Intestine.

In terms of biological role, could play an important role in morphogenesis and function of intestinal microvilli. In Gallus gallus (Chicken), this protein is Unconventional myosin-Ia (MYO1A).